Reading from the N-terminus, the 37-residue chain is Cytochrome bd-I ubiquinol oxidase subunit X (37 aa).

Residues 4–24 (FAWILGTLLACSFGVITALAL) form a helical membrane-spanning segment.

Belongs to the cytochrome ubiquinol oxidase subunit X family. As to quaternary structure, may be a subunit of cytochrome bd-I ubiquinol oxidase. Probably interacts with CydA and CydB.

It is found in the cell inner membrane. It catalyses the reaction 2 a ubiquinol + O2(in) + 4 H(+)(in) = 2 a ubiquinone + 2 H2O(in) + 4 H(+)(out). The protein operates within energy metabolism; oxidative phosphorylation. Required for correct functioning of cytochrome bd-I oxidase. This protein and AppX may have some functional overlap. The sequence is that of Cytochrome bd-I ubiquinol oxidase subunit X (cydX) from Escherichia coli (strain K12).